A 504-amino-acid chain; its full sequence is MAMVKEKEQNTKDKKLLVGVIWNFSAELKLTFMALLVLCTLATLLPFIPSSFSLSTSDFRFCISRFSSAVPLNTTTTVEESSSSPSPEKNLDRVLDNGVIKRTFTGYGSAAYNFVSMSAYRGGVNSFAVIGLSSKPLHVYGHPSYRCEWVSLDPTQDPISTTGFKILTDWGYGRIYTTVVVNCTFSSISAVNPQNSGGTLILHATTGDPTLNLTDSISVLTEPPKSVDFDLYNSTKKTKKYDYLYCGSSLYGNLSPQRVREWIAYHVRFFGERSHFVLHDAGGIHEEVFEVLKPWIELGRVTLHDIRDQERFDGYYHNQFMIVNDCLHRYRFMTKWMFFFDVDEFLHVPVKETISSVMESLEEYSQFTIEQMPMSSRICYSGDGPARTYRKWGIEKLAYRDVKKVPRRDRKYAVQPENVFATGVHMSQNLQGKTYHKAESKIRYFHYHGSISQRREPCRQLFNDSRVVFENTPYVLDTTICDVGLAVRTFELRTIGDRLLRTRQ.

Residues 30–50 form a helical membrane-spanning segment; that stretch reads LTFMALLVLCTLATLLPFIPS. Residues 242-456 enclose the GT92 domain; sequence DYLYCGSSLY…YHGSISQRRE (215 aa).

It belongs to the glycosyltransferase 92 family. As to expression, expressed in root caps, mature leaves, top of the stems and seeds.

The protein localises to the golgi apparatus membrane. Its function is as follows. Involved in the biosynthesis of beta-1,4-galactan. Beta-1,4-galactans are abundant polysaccharides in plant cell walls and are found as side-chain of rhamnogalacturonan I, which is a major component of pectin. This chain is Galactan beta-1,4-galactosyltransferase GALS3, found in Arabidopsis thaliana (Mouse-ear cress).